The primary structure comprises 245 residues: 8-amino-3,8-dideoxy-manno-octulosonate cytidylyltransferase (245 aa).

This sequence belongs to the KdsB family.

The protein localises to the cytoplasm. It catalyses the reaction 8-amino-3,8-dideoxy-alpha-D-manno-octulosonate + CTP = CMP-8-amino-3,8-dideoxy-alpha-D-manno-oct-2-ulosonate + diphosphate. It functions in the pathway bacterial outer membrane biogenesis; lipopolysaccharide biosynthesis. Activates KDO8N (a required 8-carbon sugar) for incorporation into bacterial lipopolysaccharide in the Shewanella genus. The polypeptide is 8-amino-3,8-dideoxy-manno-octulosonate cytidylyltransferase (Shewanella amazonensis (strain ATCC BAA-1098 / SB2B)).